Reading from the N-terminus, the 415-residue chain is Branched-chain-amino-acid aminotransferase 5, chloroplastic (415 aa).

The transit peptide at Met1–Arg65 directs the protein to the chloroplast. Position 261 is an N6-(pyridoxal phosphate)lysine (Lys261).

This sequence belongs to the class-IV pyridoxal-phosphate-dependent aminotransferase family. The cofactor is pyridoxal 5'-phosphate.

The protein localises to the plastid. Its subcellular location is the chloroplast. It catalyses the reaction L-leucine + 2-oxoglutarate = 4-methyl-2-oxopentanoate + L-glutamate. The enzyme catalyses L-isoleucine + 2-oxoglutarate = (S)-3-methyl-2-oxopentanoate + L-glutamate. The catalysed reaction is L-valine + 2-oxoglutarate = 3-methyl-2-oxobutanoate + L-glutamate. It functions in the pathway amino-acid biosynthesis; L-isoleucine biosynthesis; L-isoleucine from 2-oxobutanoate: step 4/4. The protein operates within amino-acid biosynthesis; L-leucine biosynthesis; L-leucine from 3-methyl-2-oxobutanoate: step 4/4. It participates in amino-acid biosynthesis; L-valine biosynthesis; L-valine from pyruvate: step 4/4. Its function is as follows. Converts 2-oxo acids to branched-chain amino acids. Acts on leucine, isoleucine and valine. This chain is Branched-chain-amino-acid aminotransferase 5, chloroplastic (BCAT5), found in Arabidopsis thaliana (Mouse-ear cress).